The following is a 299-amino-acid chain: Taste receptor type 2 member 16 (299 aa).

The Extracellular portion of the chain corresponds to 1–5 (MVPTQ). A helical transmembrane segment spans residues 6–26 (VTIFSIIMYVLESLVIIVQSC). Topologically, residues 27 to 47 (TTVAVLFREWMHFQRLSPVET) are cytoplasmic. The helical transmembrane segment at 48 to 68 (ILISLGISHFCLQWTSMLYNF) threads the bilayer. Over 69-82 (GTYSRPVLLFWKVS) the chain is Extracellular. Residues 83 to 103 (VVWEFMNILTFWLTSWLAVLY) traverse the membrane as a helical segment. Residues 104–125 (CVKVSSFTHPIFLWLRMKILKL) lie on the Cytoplasmic side of the membrane. Residues 126 to 146 (VLWLILGALIASCLSIIPSVV) form a helical membrane-spanning segment. At 147–183 (KYHIQMELVTLDNLPKNNSLILRLQQFEWYFSNPLKM) the chain is on the extracellular side. Residue Asn163 is glycosylated (N-linked (GlcNAc...) asparagine). A helical transmembrane segment spans residues 184–204 (IGFGIPFFVFLASIILLTVSL). The Cytoplasmic segment spans residues 205-233 (VQHWVQMKHYSSSNSSLKAQFTVLKSLAT). Residues 234-254 (FFTFFTSYFLTIVISFIGTVF) form a helical membrane-spanning segment. The Extracellular portion of the chain corresponds to 255–258 (DKKS). The helical transmembrane segment at 259-279 (WFWVCEAVIYGLVCIHFTSLM) threads the bilayer. Residues 280–299 (MSNPALKKALKLQFWSPEPS) are Cytoplasmic-facing.

The protein belongs to the G-protein coupled receptor T2R family. As to quaternary structure, interacts with RTP3 and RTP4.

It localises to the cell membrane. Functionally, gustducin-coupled receptor implicated in the perception of bitter compounds in the oral cavity and the gastrointestinal tract. Signals through PLCB2 and the calcium-regulated cation channel TRPM5. This is Taste receptor type 2 member 16 (Tas2r16) from Mus musculus (Mouse).